Reading from the N-terminus, the 397-residue chain is Phosphoglycerate kinase (397 aa).

Substrate contacts are provided by residues 21–23 (DFN), Arg-36, 59–62 (HCGR), Arg-118, and Arg-151. ATP-binding positions include Lys-201, Glu-323, and 353 to 356 (GGDT).

It belongs to the phosphoglycerate kinase family. Monomer.

The protein localises to the cytoplasm. The enzyme catalyses (2R)-3-phosphoglycerate + ATP = (2R)-3-phospho-glyceroyl phosphate + ADP. It functions in the pathway carbohydrate degradation; glycolysis; pyruvate from D-glyceraldehyde 3-phosphate: step 2/5. The sequence is that of Phosphoglycerate kinase from Bartonella henselae (strain ATCC 49882 / DSM 28221 / CCUG 30454 / Houston 1) (Rochalimaea henselae).